Reading from the N-terminus, the 103-residue chain is ATP synthase subunit H, mitochondrial (103 aa).

A mitochondrion-targeting transit peptide spans 1 to 26 (MSRILKSLSRSYSTTSPRLYVDVVQG).

It belongs to the ATPase h subunit family. In terms of assembly, F-type ATPases have 2 components, CF(1) - the catalytic core - and CF(0) - the membrane proton channel.

The protein resides in the mitochondrion. It is found in the mitochondrion inner membrane. Its function is as follows. Mitochondrial membrane ATP synthase (F(1)F(0) ATP synthase or Complex V) produces ATP from ADP in the presence of a proton gradient across the membrane which is generated by electron transport complexes of the respiratory chain. F-type ATPases consist of two structural domains, F(1) - containing the extramembraneous catalytic core and F(0) - containing the membrane proton channel, linked together by a central stalk and a peripheral stalk. During catalysis, ATP synthesis in the catalytic domain of F(1) is coupled via a rotary mechanism of the central stalk subunits to proton translocation. Part of the complex F(0) domain. Minor subunit located with subunit a in the membrane. The chain is ATP synthase subunit H, mitochondrial (atp14) from Schizosaccharomyces pombe (strain 972 / ATCC 24843) (Fission yeast).